The chain runs to 123 residues: Large ribosomal subunit protein uL18 (123 aa).

Belongs to the universal ribosomal protein uL18 family. As to quaternary structure, part of the 50S ribosomal subunit; part of the 5S rRNA/L5/L18/L25 subcomplex. Contacts the 5S and 23S rRNAs.

Its function is as follows. This is one of the proteins that bind and probably mediate the attachment of the 5S RNA into the large ribosomal subunit, where it forms part of the central protuberance. This chain is Large ribosomal subunit protein uL18, found in Chlamydia felis (strain Fe/C-56) (Chlamydophila felis).